Reading from the N-terminus, the 194-residue chain is uncharacterized protein (194 aa).

This is an uncharacterized protein from Rickettsia prowazekii (strain Madrid E).